The primary structure comprises 309 residues: Ribosomal RNA small subunit methyltransferase H (309 aa).

Residues 32–34 (AGH), D52, F79, D100, and Q107 contribute to the S-adenosyl-L-methionine site.

Belongs to the methyltransferase superfamily. RsmH family.

The protein resides in the cytoplasm. It catalyses the reaction cytidine(1402) in 16S rRNA + S-adenosyl-L-methionine = N(4)-methylcytidine(1402) in 16S rRNA + S-adenosyl-L-homocysteine + H(+). Functionally, specifically methylates the N4 position of cytidine in position 1402 (C1402) of 16S rRNA. This chain is Ribosomal RNA small subunit methyltransferase H, found in Mycoplasma capricolum subsp. capricolum (strain California kid / ATCC 27343 / NCTC 10154).